The chain runs to 64 residues: DNA-binding protein 7b (64 aa).

The protein belongs to the 7 kDa DNA-binding/endoribonuclease P2 family. Monomer.

It localises to the cytoplasm. Its function is as follows. Can constrain negative DNA supercoils. May be involved in maintaining the integrity of the genome at high temperature. This Saccharolobus islandicus (strain HVE10/4) (Sulfolobus islandicus) protein is DNA-binding protein 7b.